A 443-amino-acid polypeptide reads, in one-letter code: ATP-dependent protease ATPase subunit HslU (443 aa).

Residues isoleucine 18 and 60–65 (GVGKTE) each bind ATP. A disordered region spans residues 142-162 (LGFEASPSEESNATRQKFRKK). Positions 256, 321, and 393 each coordinate ATP.

It belongs to the ClpX chaperone family. HslU subfamily. In terms of assembly, a double ring-shaped homohexamer of HslV is capped on each side by a ring-shaped HslU homohexamer. The assembly of the HslU/HslV complex is dependent on binding of ATP.

Its subcellular location is the cytoplasm. Its function is as follows. ATPase subunit of a proteasome-like degradation complex; this subunit has chaperone activity. The binding of ATP and its subsequent hydrolysis by HslU are essential for unfolding of protein substrates subsequently hydrolyzed by HslV. HslU recognizes the N-terminal part of its protein substrates and unfolds these before they are guided to HslV for hydrolysis. This Nitrosomonas europaea (strain ATCC 19718 / CIP 103999 / KCTC 2705 / NBRC 14298) protein is ATP-dependent protease ATPase subunit HslU.